A 326-amino-acid chain; its full sequence is Light-induced protein, chloroplastic (326 aa).

Residues 1-63 (MASISSLNQI…TNPKPKFTAQ (63 aa)) constitute a chloroplast transit peptide.

Belongs to the LIPC family. In terms of assembly, associates with the major light-harvesting antenna complex polypeptides of the PSII oxygen-evolving complex. Expressed in leaves.

Its subcellular location is the plastid. It is found in the chloroplast thylakoid membrane. Required for normal plant growth. May be both photoprotective and play an ancillary role in photosynthesis. May structurally stabilize thylakoids during osmotic and oxidative stress. The chain is Light-induced protein, chloroplastic from Solanum tuberosum (Potato).